A 523-amino-acid chain; its full sequence is Peptide chain release factor 3 (523 aa).

The 268-residue stretch at 10 to 277 (NKRRTFAIIS…QFVDLAPAPG (268 aa)) folds into the tr-type G domain. GTP is bound by residues 19-26 (SHPDAGKT), 87-91 (DTPGH), and 141-144 (NKLD).

It belongs to the TRAFAC class translation factor GTPase superfamily. Classic translation factor GTPase family. PrfC subfamily.

Its subcellular location is the cytoplasm. Increases the formation of ribosomal termination complexes and stimulates activities of RF-1 and RF-2. It binds guanine nucleotides and has strong preference for UGA stop codons. It may interact directly with the ribosome. The stimulation of RF-1 and RF-2 is significantly reduced by GTP and GDP, but not by GMP. The chain is Peptide chain release factor 3 from Lactobacillus delbrueckii subsp. bulgaricus (strain ATCC BAA-365 / Lb-18).